A 438-amino-acid polypeptide reads, in one-letter code: MYHDYASKLLADYRSDPPLWESDLPRHNRYSDNILNARYCGNKNGAAPVYNECTNSPGKAEKGLQLSDLRNFSFMLNPQHKNIGYGDAQDLEPYSPIPKDKLFNNLKIHRPAFSTHTENLIRRNVVRTEKKTFPQVATLKSTQKNCLTQPSSLPSLKNPKNISMPSTRFSEHIKFFSYEDVPKLRIKGTIKHEQHLGDQMPGQHYNGYIPHKDVYNILCLAHNLPASVEKVMAGRGIPLGNPHVKPNIEQELIKSTCTYTGVPILGPLPSKDLQHGREYQEFSANRHMLQVSNILHSVFANHSIKPQILEDIPTLNAQLTSIKPVSPFLNKAYQTHYMENIVTLVPRFKSIANYSSPIPHYSKRNSGQAEYFDTSKQTISRHNNYIPKYTGGIGDSKLDSSFPKDFNASSVPLTSAEKDHSLRGDNSACCISSISPSL.

The protein belongs to the asfivirus p49 structural protein family.

Its subcellular location is the virion. Together with the penton and the other minor capsid proteins (M1249L, p17), forms a complicated network immediately below the outer capsid shell, stabilizing the whole capsid. Plays an essential role in the formation of infectious virus particles. Especially required for the formation of the capsid vertices. During virion assembly, associates with the membrane and probably mediates the docking of the penton complex to the inner membrane, where it recruits the capsomers to form the penton core. The polypeptide is Minor capsid protein p49 (Ornithodoros (relapsing fever ticks)).